Here is a 292-residue protein sequence, read N- to C-terminus: Glycine--tRNA ligase alpha subunit (292 aa).

It belongs to the class-II aminoacyl-tRNA synthetase family. As to quaternary structure, tetramer of two alpha and two beta subunits.

The protein resides in the cytoplasm. The catalysed reaction is tRNA(Gly) + glycine + ATP = glycyl-tRNA(Gly) + AMP + diphosphate. In Geobacter sulfurreducens (strain ATCC 51573 / DSM 12127 / PCA), this protein is Glycine--tRNA ligase alpha subunit.